We begin with the raw amino-acid sequence, 378 residues long: Gibberellin 20 oxidase 2 (378 aa).

Positions 1–10 (MAILCTTTSP) are enriched in polar residues. Positions 1-26 (MAILCTTTSPAEKEHEPKQDLEKDQT) are disordered. Basic and acidic residues predominate over residues 11-25 (AEKEHEPKQDLEKDQ). The region spanning 220 to 320 (ENDSIMRLNH…RKSMAFFLCP (101 aa)) is the Fe2OG dioxygenase domain. His-245, Asp-247, and His-301 together coordinate Fe cation. Arg-311 is an active-site residue.

The protein belongs to the iron/ascorbate-dependent oxidoreductase family. GA20OX subfamily. It depends on Fe(2+) as a cofactor. The cofactor is L-ascorbate. In terms of tissue distribution, expressed in inflorescence and developing siliques. Detected in seeds, roots, cotyledons and leaves. In seeds, specifically detected at the rim of the embryo and the outer integument.

It carries out the reaction gibberellin A12 + 2 2-oxoglutarate + 3 O2 + H(+) = gibberellin A9 + 2 succinate + 3 CO2 + 2 H2O. The catalysed reaction is gibberellin A12 + 2-oxoglutarate + O2 = gibberellin A15 + succinate + CO2. The enzyme catalyses gibberellin A15 + 2-oxoglutarate + O2 = gibberellin A24 + succinate + CO2 + H2O. It catalyses the reaction gibberellin A53 + 2-oxoglutarate + O2 = gibberellin A44 + succinate + CO2. It carries out the reaction gibberellin A12 + 3 2-oxoglutarate + 3 O2 = gibberellin A25 + 3 succinate + 3 CO2 + H2O + H(+). It participates in plant hormone biosynthesis; gibberellin biosynthesis. Functionally, key oxidase enzyme in the biosynthesis of gibberellin that catalyzes the conversion of GA12 to GA9, via a three-step oxidation at C-20 of the GA skeleton, and GA25 is also formed as a minor product. GA53 is less effectively oxidized than GA12 and is only oxidized one step to GA44. Involved in the promotion of the floral transition, fertility and silique elongation, but plays only a minor role in elongation of seedling organs. Acts redundantly with GA20OX1. This is Gibberellin 20 oxidase 2 (GA20OX2) from Arabidopsis thaliana (Mouse-ear cress).